Consider the following 177-residue polypeptide: Large ribosomal subunit protein uL6 (177 aa).

The protein belongs to the universal ribosomal protein uL6 family. As to quaternary structure, part of the 50S ribosomal subunit.

Functionally, this protein binds to the 23S rRNA, and is important in its secondary structure. It is located near the subunit interface in the base of the L7/L12 stalk, and near the tRNA binding site of the peptidyltransferase center. The protein is Large ribosomal subunit protein uL6 of Cereibacter sphaeroides (strain ATCC 17025 / ATH 2.4.3) (Rhodobacter sphaeroides).